The sequence spans 104 residues: DNA-directed RNA polymerase subunit omega (104 aa).

Residues 53–104 form a disordered region; the sequence is EIESGNVTIHPDPEGKREAVRRRIEEEKRRKEEEEKKIKEQIAKEKEDGEKI. Positions 63-104 are enriched in basic and acidic residues; that stretch reads PDPEGKREAVRRRIEEEKRRKEEEEKKIKEQIAKEKEDGEKI.

It belongs to the RNA polymerase subunit omega family. As to quaternary structure, the RNAP catalytic core consists of 2 alpha, 1 beta, 1 beta' and 1 omega subunit. When a sigma factor is associated with the core the holoenzyme is formed, which can initiate transcription.

It carries out the reaction RNA(n) + a ribonucleoside 5'-triphosphate = RNA(n+1) + diphosphate. In terms of biological role, promotes RNA polymerase assembly. Latches the N- and C-terminal regions of the beta' subunit thereby facilitating its interaction with the beta and alpha subunits. This is DNA-directed RNA polymerase subunit omega from Streptococcus pneumoniae serotype 2 (strain D39 / NCTC 7466).